Reading from the N-terminus, the 668-residue chain is Transketolase (668 aa).

His28 is a substrate binding site. Thiamine diphosphate contacts are provided by residues His68 and 116-118 (GPL). Asp157 is a Mg(2+) binding site. Residues Gly158 and Asn187 each contribute to the thiamine diphosphate site. Asn187 and Ile189 together coordinate Mg(2+). Substrate is bound by residues His263, Arg358, and Ser385. Position 263 (His263) interacts with thiamine diphosphate. Glu412 acts as the Proton donor in catalysis. Residue Phe438 participates in thiamine diphosphate binding. Substrate is bound by residues His462, Asp470, His474, and Arg521.

This sequence belongs to the transketolase family. As to quaternary structure, homodimer. The cofactor is Mg(2+). Thiamine diphosphate is required as a cofactor.

The enzyme catalyses D-sedoheptulose 7-phosphate + D-glyceraldehyde 3-phosphate = aldehydo-D-ribose 5-phosphate + D-xylulose 5-phosphate. Functionally, catalyzes the transfer of a two-carbon ketol group from a ketose donor to an aldose acceptor, likely via a covalent intermediate with the cofactor thiamine pyrophosphate. Can use L-erythrulose as donor and D-ribose-5-phosphate as acceptor substrates, forming glycolaldehyde and D-sedoheptulose-7-phosphate. For synthetic purposes, is able to use hydroxypyruvate (HPA) as donor substrate, making the reaction irreversible due to the release of carbon dioxide, and various aldehydes as acceptor substrates, which leads to the corresponding ketoses. Thus, using hydroxypyruvate as donor and three different aldehydes as acceptors, i.e. glycolaldehyde, D-glyceraldehyde and butyraldehyde, the enzyme stereoselectively forms the corresponding products L-erythrulose, D-xylulose and (3S)-1,3-dihydroxyhexan-2-one, respectively. In Geobacillus stearothermophilus (Bacillus stearothermophilus), this protein is Transketolase.